A 205-amino-acid chain; its full sequence is Proteasome subunit beta type-3 (205 aa).

Residue Ser-2 is modified to N-acetylserine. N6-acetyllysine is present on Lys-77.

This sequence belongs to the peptidase T1B family. In terms of assembly, the 26S proteasome consists of a 20S proteasome core and two 19S regulatory subunits. The 20S proteasome core is a barrel-shaped complex made of 28 subunits that are arranged in four stacked rings. The two outer rings are each formed by seven alpha subunits, and the two inner rings are formed by seven beta subunits. The proteolytic activity is exerted by three beta-subunits PSMB5, PSMB6 and PSMB7.

The protein localises to the cytoplasm. It localises to the nucleus. In terms of biological role, non-catalytic component of the 20S core proteasome complex involved in the proteolytic degradation of most intracellular proteins. This complex plays numerous essential roles within the cell by associating with different regulatory particles. Associated with two 19S regulatory particles, forms the 26S proteasome and thus participates in the ATP-dependent degradation of ubiquitinated proteins. The 26S proteasome plays a key role in the maintenance of protein homeostasis by removing misfolded or damaged proteins that could impair cellular functions, and by removing proteins whose functions are no longer required. Associated with the PA200 or PA28, the 20S proteasome mediates ubiquitin-independent protein degradation. This type of proteolysis is required in several pathways including spermatogenesis (20S-PA200 complex) or generation of a subset of MHC class I-presented antigenic peptides (20S-PA28 complex). The polypeptide is Proteasome subunit beta type-3 (PSMB3) (Bos taurus (Bovine)).